The primary structure comprises 100 residues: Urease subunit gamma (100 aa).

The protein belongs to the urease gamma subunit family. As to quaternary structure, heterotrimer of UreA (gamma), UreB (beta) and UreC (alpha) subunits. Three heterotrimers associate to form the active enzyme.

The protein resides in the cytoplasm. It catalyses the reaction urea + 2 H2O + H(+) = hydrogencarbonate + 2 NH4(+). Its pathway is nitrogen metabolism; urea degradation; CO(2) and NH(3) from urea (urease route): step 1/1. This Cereibacter sphaeroides (strain ATCC 17025 / ATH 2.4.3) (Rhodobacter sphaeroides) protein is Urease subunit gamma.